The chain runs to 66 residues: MPKMKTHKGAAKRFKKTGSGKLKRSHAFTSHLFANKSQKQKRKLRKSAIVHSGDFKRIREMLTYKK.

Composition is skewed to basic residues over residues 1 to 26 and 38 to 48; these read MPKM…KRSH and QKQKRKLRKSA. A disordered region spans residues 1–48; it reads MPKMKTHKGAAKRFKKTGSGKLKRSHAFTSHLFANKSQKQKRKLRKSA.

This sequence belongs to the bacterial ribosomal protein bL35 family.

This chain is Large ribosomal subunit protein bL35, found in Halalkalibacterium halodurans (strain ATCC BAA-125 / DSM 18197 / FERM 7344 / JCM 9153 / C-125) (Bacillus halodurans).